The sequence spans 574 residues: 2-succinyl-5-enolpyruvyl-6-hydroxy-3-cyclohexene-1-carboxylate synthase (574 aa).

Belongs to the TPP enzyme family. MenD subfamily. As to quaternary structure, homodimer. Mg(2+) is required as a cofactor. The cofactor is Mn(2+). Requires thiamine diphosphate as cofactor.

The enzyme catalyses isochorismate + 2-oxoglutarate + H(+) = 5-enolpyruvoyl-6-hydroxy-2-succinyl-cyclohex-3-ene-1-carboxylate + CO2. The protein operates within quinol/quinone metabolism; 1,4-dihydroxy-2-naphthoate biosynthesis; 1,4-dihydroxy-2-naphthoate from chorismate: step 2/7. It functions in the pathway quinol/quinone metabolism; menaquinone biosynthesis. Catalyzes the thiamine diphosphate-dependent decarboxylation of 2-oxoglutarate and the subsequent addition of the resulting succinic semialdehyde-thiamine pyrophosphate anion to isochorismate to yield 2-succinyl-5-enolpyruvyl-6-hydroxy-3-cyclohexene-1-carboxylate (SEPHCHC). This Vibrio atlanticus (strain LGP32) (Vibrio splendidus (strain Mel32)) protein is 2-succinyl-5-enolpyruvyl-6-hydroxy-3-cyclohexene-1-carboxylate synthase.